The primary structure comprises 247 residues: Small ribosomal subunit protein uS2 (247 aa).

This sequence belongs to the universal ribosomal protein uS2 family.

This chain is Small ribosomal subunit protein uS2, found in Ralstonia pickettii (strain 12J).